We begin with the raw amino-acid sequence, 1181 residues long: Sodium/potassium/calcium exchanger 1 (1181 aa).

Residues 1-419 (MGKLIRMGTQ…DLFSVEDRRQ (419 aa)) are Extracellular-facing. 3 disordered regions span residues 107–232 (AMED…TSLK), 255–276 (SLVG…STTP), and 300–323 (STPA…GTST). The segment covering 124 to 136 (SLKNNYSPTTAGT) has biased composition (polar residues). N-linked (GlcNAc...) asparagine glycosylation occurs at N271. A compositionally biased stretch (polar residues) spans 301-311 (TPATTEGSTAA). The helical transmembrane segment at 420–440 (GWVVLHIFGMTYVFVALAIVC) threads the bilayer. Residues 441–464 (DEYFVPALGVITDKLQISEDVAGA) lie on the Cytoplasmic side of the membrane. Residues 461 to 501 (VAGATFMAAGGSAPELFTSLIGVFISHSNVGIGTIVGSAVF) form an Alpha-1 repeat. Residues 465–485 (TFMAAGGSAPELFTSLIGVFI) traverse the membrane as a helical segment. Topologically, residues 486–491 (SHSNVG) are extracellular. A helical membrane pass occupies residues 492–512 (IGTIVGSAVFNILFVIGTCAL). Over 513–519 (FSREILN) the chain is Cytoplasmic. The helical transmembrane segment at 520 to 544 (LTWWPLFRDVSFYILDLSMLIVFFL) threads the bilayer. Over 545 to 552 (DSLIAWWE) the chain is Extracellular. Residues 553 to 569 (SLLLLLAYALYVFTMKW) traverse the membrane as a helical segment. At 570-989 (NKQIERWVKE…SLEWPESRQK (420 aa)) the chain is on the cytoplasmic side. Residues 598–617 (PSDGAIEENEQQDNKKLKLP) form a disordered region. Phosphoserine is present on S625. The interval 650 to 983 (GEARPSKDKQ…ESEEPLSLEW (334 aa)) is disordered. Position 690 is a phosphothreonine (T690). Over residues 701–715 (GDQEEDPGCQEDVDE) the composition is skewed to acidic residues. Repeat copies occupy residues 730–741 (ETEAEGKKDEEG), 742–754 (ETEA…GQEE), 755–766 (ETETKGKEKQEG), 767–778 (ETESEGKDEQEG), 779–791 (ETEA…DHEG), 792–804 (ETEA…EHEG), 805–817 (ETEA…EQEG), 818–830 (ETEA…EQEG), 831–843 (ETEA…EHEV), 844–856 (ETEA…NHEG), 857–869 (ETEA…DHEG), 870–881 (ETEAEGNVEHQG), 882–893 (ETEAEGKVEHEG), and 894–905 (ETEAGEKDEHEG). Composition is skewed to basic and acidic residues over residues 730–750 (ETEA…RKED), 757–775 (ETKG…GKDE), and 782–805 (AEGK…HEGE). Residues 730–905 (ETEAEGKKDE…EAGEKDEHEG (176 aa)) are 14 X approximate tandem repeats. The segment covering 806–820 (TEAEGTEDEQEGETE) has biased composition (acidic residues). Residues 834-906 (AEGKEVEHEV…AGEKDEHEGQ (73 aa)) show a composition bias toward basic and acidic residues. Acidic residues-rich tracts occupy residues 921–931 (GEAEANAEDQC) and 949–979 (GDSE…EEPL). Residues 990–1010 (QAIYLFLLPIVFPLWLTIPDV) traverse the membrane as a helical segment. Over 1011–1017 (RRQEARK) the chain is Extracellular. The helical transmembrane segment at 1018–1038 (FFVITFLGSIIWIAMFSYLMV) threads the bilayer. At 1039-1053 (WWAHQVGETIGISEE) the chain is on the cytoplasmic side. A helical membrane pass occupies residues 1054–1074 (IMGLTILAAGTSIPDLITSVI). An Alpha-2 repeat occupies 1061 to 1092 (AAGTSIPDLITSVIVARKGLGDMAVSSSVGSN). Residues 1075-1092 (VARKGLGDMAVSSSVGSN) are Extracellular-facing. The helical transmembrane segment at 1093 to 1113 (IFDITVGLPVPWLLFSLINAL) threads the bilayer. Residues 1114-1121 (QPIPVSSN) are Cytoplasmic-facing. The helical transmembrane segment at 1122–1142 (GLFCAIVLLFLMLLFVIFSIA) threads the bilayer. At 1143-1150 (SCKWRMNK) the chain is on the extracellular side. The chain crosses the membrane as a helical span at residues 1151–1171 (ILGFTMFLLYFVFLVISVMLE). The Cytoplasmic segment spans residues 1172–1181 (DRIISCPVSV).

It belongs to the Ca(2+):cation antiporter (CaCA) (TC 2.A.19) family. SLC24A subfamily. Post-translationally, the uncleaved signal sequence is required for efficient membrane targeting and proper membrane integration and topology. Highly expressed in the eye.

The protein resides in the cell membrane. The catalysed reaction is Ca(2+)(out) + K(+)(out) + 4 Na(+)(in) = Ca(2+)(in) + K(+)(in) + 4 Na(+)(out). Its function is as follows. Calcium, potassium:sodium antiporter that transports 1 Ca(2+) and 1 K(+) in exchange for 4 Na(+). Critical component of the visual transduction cascade, controlling the calcium concentration of outer segments during light and darkness. Light causes a rapid lowering of cytosolic free calcium in the outer segment of both retinal rod and cone photoreceptors and the light-induced lowering of calcium is caused by extrusion via this protein which plays a key role in the process of light adaptation. The sequence is that of Sodium/potassium/calcium exchanger 1 (Slc24a1) from Rattus norvegicus (Rat).